A 421-amino-acid chain; its full sequence is Testin (421 aa).

A PET domain is found at 92 to 199; that stretch reads MILTNPVAAK…GDVKLPCEMD (108 aa). A disordered region spans residues 133-164; the sequence is EKQPVAGSEGAQYRKKQLAKQLPAHDQDPSKC. The span at 155–164 shows a compositional bias: basic and acidic residues; that stretch reads PAHDQDPSKC. LIM zinc-binding domains are found at residues 234–297, 299–359, and 362–421; these read YSCY…CDSE, PRCA…NHAV, and QGCH…KMMS.

The protein belongs to the prickle / espinas / testin family. Interacts via LIM domain 1 with ZYX. Interacts (via LIM domain 3) with ENAH and VASP. Interacts with ALKBH4, talin, actin, alpha-actinin, GRIP1 and PXN. Interacts (via LIM domain 2) with ACTL7A (via N-terminus). Heterodimer with ACTL7A; the heterodimer interacts with ENAH to form a heterotrimer.

It is found in the cytoplasm. The protein resides in the cell junction. The protein localises to the focal adhesion. Scaffold protein that may play a role in cell adhesion, cell spreading and in the reorganization of the actin cytoskeleton. Plays a role in the regulation of cell proliferation. May act as a tumor suppressor. The sequence is that of Testin (TES) from Saimiri boliviensis boliviensis (Bolivian squirrel monkey).